A 419-amino-acid chain; its full sequence is Fusaric acid cluster transcription factor FUB10 (419 aa).

The zn(2)-C6 fungal-type DNA-binding region spans 16 to 47; sequence CDRCRAQKLRCHRDSGHSTDACLRCLKSGIEC. A disordered region spans residues 50–92; sequence SKARPTGRPPSRQVQPTVVVEQGDTSSSSHTTDSSPSAGGTDM. Low complexity predominate over residues 74-86; sequence TSSSSHTTDSSPS.

It is found in the nucleus. In terms of biological role, transcription factor that regulates the expression of the gene cluster that mediates the biosynthesis of fusaric acid, a mycotoxin with low to moderate toxicity to animals and humans, but with high phytotoxic properties. The sequence is that of Fusaric acid cluster transcription factor FUB10 from Gibberella fujikuroi (strain CBS 195.34 / IMI 58289 / NRRL A-6831) (Bakanae and foot rot disease fungus).